Here is a 224-residue protein sequence, read N- to C-terminus: Non-structural protein V (224 aa).

Disordered stretches follow at residues 57 to 98 and 144 to 172; these read IQYP…EPLF and RTST…GHRR. Histidine 170, cysteine 189, cysteine 193, cysteine 205, cysteine 207, cysteine 210, cysteine 214, and cysteine 217 together coordinate Zn(2+).

It belongs to the paramyxoviruses V protein family. Interacts with host IFIH1/MDA5 and DHX58/LGP2. Forms with host DDB1, CUL4A, STAT1, STAT2 and STAT3 the mumps virus V-dependent complex (VDC).

Its subcellular location is the virion. It is found in the host cytoplasm. In terms of biological role, plays an essential role in the inhibition of host immune response. Prevents the establishment of cellular antiviral state by blocking interferon-alpha/beta (IFN-alpha/beta) production and signaling pathway. Interacts with host IFIH1/MDA5 and DHX58/LGP2 to inhibit the transduction pathway involved in the activation of IFN-beta promoter, thus protecting the virus against cell antiviral state. Blocks the type I and II interferon signaling pathways by interacting with host STAT1, STAT2 and STAT3, and mediating their ubiquitination and subsequent proteasomal degradation. This Mumps virus genotype N (strain L-Zagreb vaccine) (MuV) protein is Non-structural protein V.